Reading from the N-terminus, the 483-residue chain is Probable glycosyltransferase 6 (483 aa).

Residues 1 to 40 (MAASETAPFGVSAASKGGGGVAGARAQHGQLAVAGRVHDA) lie on the Cytoplasmic side of the membrane. A helical; Signal-anchor for type II membrane protein transmembrane segment spans residues 41 to 61 (LVFAAGAVAAVLVLLATASFL). Residues 62–483 (SPMPVTNLVA…PLPFDYPAAR (422 aa)) lie on the Lumenal side of the membrane. Asparagine 144 carries N-linked (GlcNAc...) asparagine glycosylation.

It belongs to the glycosyltransferase 34 family.

The protein localises to the golgi apparatus membrane. In terms of biological role, probable glycosyltransferase that may be involved in the biosynthesis of xyloglucan. In Oryza sativa subsp. japonica (Rice), this protein is Probable glycosyltransferase 6.